The sequence spans 31 residues: Mycofactocin precursor peptide (31 aa).

The protein belongs to the mycofactocin precursor peptide family. Post-translationally, the post-translational modifications that lead to mycofactocin involve oxidative decarboxylation of the C-terminal tyrosine residue catalyzed by MftC, introduction of a tyramine-valine cross-link, removal of the modified C-terminal dipeptide by MftE. The released dipeptide then undergoes oxidative deamination by MftD, glycosylation by MftF and methylation by an unknown enzyme.

In terms of biological role, precursor peptide that leads to mycofactocin (MFT) after extensive post-translational modifications by enzymes encoded by adjacent genes. Mycofactocin acts as a redox cofactor of nicotinamide-dependent oxidoreductases encoded in the same locus. Is required for the in vivo ethanol assimilation in M.smegmatis. The chain is Mycofactocin precursor peptide from Mycolicibacterium smegmatis (strain ATCC 700084 / mc(2)155) (Mycobacterium smegmatis).